The primary structure comprises 184 residues: ATP synthase subunit b, chloroplastic (184 aa).

A helical transmembrane segment spans residues 27 to 49; the sequence is LATNLINLSVVLGVLIFFGKGVL.

This sequence belongs to the ATPase B chain family. F-type ATPases have 2 components, F(1) - the catalytic core - and F(0) - the membrane proton channel. F(1) has five subunits: alpha(3), beta(3), gamma(1), delta(1), epsilon(1). F(0) has four main subunits: a(1), b(1), b'(1) and c(10-14). The alpha and beta chains form an alternating ring which encloses part of the gamma chain. F(1) is attached to F(0) by a central stalk formed by the gamma and epsilon chains, while a peripheral stalk is formed by the delta, b and b' chains.

It is found in the plastid. It localises to the chloroplast thylakoid membrane. Functionally, f(1)F(0) ATP synthase produces ATP from ADP in the presence of a proton or sodium gradient. F-type ATPases consist of two structural domains, F(1) containing the extramembraneous catalytic core and F(0) containing the membrane proton channel, linked together by a central stalk and a peripheral stalk. During catalysis, ATP synthesis in the catalytic domain of F(1) is coupled via a rotary mechanism of the central stalk subunits to proton translocation. Component of the F(0) channel, it forms part of the peripheral stalk, linking F(1) to F(0). In Lactuca sativa (Garden lettuce), this protein is ATP synthase subunit b, chloroplastic.